We begin with the raw amino-acid sequence, 365 residues long: 2-aminoethylphosphonate--pyruvate transaminase (365 aa).

Lysine 194 is modified (N6-(pyridoxal phosphate)lysine).

Belongs to the class-V pyridoxal-phosphate-dependent aminotransferase family. PhnW subfamily. As to quaternary structure, homodimer. Requires pyridoxal 5'-phosphate as cofactor.

The enzyme catalyses (2-aminoethyl)phosphonate + pyruvate = phosphonoacetaldehyde + L-alanine. Involved in phosphonate degradation. This is 2-aminoethylphosphonate--pyruvate transaminase from Bacillus cereus (strain ATCC 14579 / DSM 31 / CCUG 7414 / JCM 2152 / NBRC 15305 / NCIMB 9373 / NCTC 2599 / NRRL B-3711).